Consider the following 474-residue polypeptide: Replication-associated protein (474 aa).

Positions 248–255 (GKRFQEDR) match the Nuclear localization signal motif. Residues 455–474 (AFAPGFSLTSEPEPKRRRFF) form a disordered region.

The protein resides in the host nucleus. Functionally, plays an essential for the replication of viral DNA. Presumably cleaves viral genomic dsRNA replicative form to initiate rolling circle replication. In Avon-Heathcote Estuary associated kieseladnavirus (AHEaBV), this protein is Replication-associated protein.